Reading from the N-terminus, the 230-residue chain is Ribonuclease 3 (230 aa).

The region spanning 1–134 (MKQLEELLST…FLGALLLDKG (134 aa)) is the RNase III domain. Residue Glu-47 participates in Mg(2+) binding. Residue Asp-51 is part of the active site. Residues Asp-120 and Glu-123 each contribute to the Mg(2+) site. Glu-123 is an active-site residue. One can recognise a DRBM domain in the interval 160 to 229 (DYKTCLQEFL…AKNALAQLSE (70 aa)).

It belongs to the ribonuclease III family. In terms of assembly, homodimer. The cofactor is Mg(2+).

It localises to the cytoplasm. It catalyses the reaction Endonucleolytic cleavage to 5'-phosphomonoester.. Functionally, digests double-stranded RNA. Involved in the processing of primary rRNA transcript to yield the immediate precursors to the large and small rRNAs (23S and 16S). Processes some mRNAs, and tRNAs when they are encoded in the rRNA operon. Processes pre-crRNA and tracrRNA of type II CRISPR loci if present in the organism. The protein is Ribonuclease 3 of Streptococcus pyogenes serotype M49 (strain NZ131).